The primary structure comprises 287 residues: Protease HtpX (287 aa).

2 helical membrane passes run 4–24 and 33–53; these read IFLLIATNLAVLLVASIVMSI and GGLLVFAAIFGFGGAFISLAI. Position 139 (His139) interacts with Zn(2+). Residue Glu140 is part of the active site. His143 lines the Zn(2+) pocket. Helical transmembrane passes span 154–174 and 195–215; these read LIQGVVNTFVIFAARVVAGII and AVVFVLDMLFGILASIIVAYF. Residue Glu220 participates in Zn(2+) binding.

The protein belongs to the peptidase M48B family. It depends on Zn(2+) as a cofactor.

It is found in the cell inner membrane. The protein is Protease HtpX of Shewanella putrefaciens (strain CN-32 / ATCC BAA-453).